The sequence spans 263 residues: Palmitoyltransferase ZDHHC21 (263 aa).

Over 1 to 4 (MKMR) the chain is Cytoplasmic. The helical transmembrane segment at 5–25 (LHFVVDPMGWFCMSMVFFVWI) threads the bilayer. The Extracellular segment spans residues 26–44 (YNSFLIPKLVLLPHYAEGH). The chain crosses the membrane as a helical span at residues 45–65 (ITAEPVICYYLASLLCFSALF). Over 66 to 131 (RASTTDPGKL…WINNCVGEDN (66 aa)) the chain is Cytoplasmic. Positions 90 to 140 (ELCNKCNMMRPKRSHHCSRCGHCVRRMDHHCPWINNCVGEDNHWLFLQLCF) constitute a DHHC domain. The S-palmitoyl cysteine intermediate role is filled by Cys-120. Residues 132–152 (HWLFLQLCFYTQVLSFYTLVL) traverse the membrane as a helical segment. The Extracellular segment spans residues 153-181 (DFCQYYYFLPLSSVDQADFAVHHELALLR). A helical transmembrane segment spans residues 182–202 (VSCFMGLIMFGGISSLFYTQV). Over 203–263 (KGILTDTTTI…KLNLTIRSHV (61 aa)) the chain is Cytoplasmic.

Belongs to the DHHC palmitoyltransferase family.

The protein localises to the golgi apparatus membrane. Its subcellular location is the golgi apparatus. It is found in the cis-Golgi network membrane. The protein resides in the cell membrane. The catalysed reaction is L-cysteinyl-[protein] + hexadecanoyl-CoA = S-hexadecanoyl-L-cysteinyl-[protein] + CoA. Its function is as follows. Palmitoyltransferase that catalyzes the addition of palmitate onto various protein substrates. The sequence is that of Palmitoyltransferase ZDHHC21 from Danio rerio (Zebrafish).